A 206-amino-acid chain; its full sequence is Dephospho-CoA kinase (206 aa).

The region spanning 4 to 204 (IVGLTGGIGS…QFYLQQAENK (201 aa)) is the DPCK domain. ATP is bound at residue 12-17 (GSGKTT).

This sequence belongs to the CoaE family.

The protein resides in the cytoplasm. It catalyses the reaction 3'-dephospho-CoA + ATP = ADP + CoA + H(+). Its pathway is cofactor biosynthesis; coenzyme A biosynthesis; CoA from (R)-pantothenate: step 5/5. Catalyzes the phosphorylation of the 3'-hydroxyl group of dephosphocoenzyme A to form coenzyme A. In Haemophilus influenzae (strain 86-028NP), this protein is Dephospho-CoA kinase.